Here is a 275-residue protein sequence, read N- to C-terminus: NH(3)-dependent NAD(+) synthetase (275 aa).

43–50 (GISGGVDS) serves as a coordination point for ATP. Asp49 is a Mg(2+) binding site. Residue Arg145 coordinates deamido-NAD(+). Thr165 contributes to the ATP binding site. Residue Glu170 coordinates Mg(2+). Residues Lys178 and Asp185 each contribute to the deamido-NAD(+) site. The ATP site is built by Lys194 and Thr216. 265-266 (HK) is a binding site for deamido-NAD(+).

This sequence belongs to the NAD synthetase family. As to quaternary structure, homodimer.

The enzyme catalyses deamido-NAD(+) + NH4(+) + ATP = AMP + diphosphate + NAD(+) + H(+). It functions in the pathway cofactor biosynthesis; NAD(+) biosynthesis; NAD(+) from deamido-NAD(+) (ammonia route): step 1/1. In terms of biological role, catalyzes the ATP-dependent amidation of deamido-NAD to form NAD. Uses ammonia as a nitrogen source. This is NH(3)-dependent NAD(+) synthetase from Shewanella denitrificans (strain OS217 / ATCC BAA-1090 / DSM 15013).